The following is a 359-amino-acid chain: NF-kappa-B inhibitor beta (359 aa).

Ser19 and Ser23 each carry phosphoserine; by RPS6KA1. 3 ANK repeats span residues 57-86, 93-122, and 126-155; these read DGDTALHLAVIHQHEPFLDFLLGFSAGTEY, LGQTALHLAAILGEASTVEKLYAAGAGVLV, and GGHTALHLACRVRAHTCACVLLQPRPSHPR. The tract at residues 153 to 194 is disordered; that stretch reads HPRDASDTYLTQSQDCTPDTSHAPAAVDSQPNPENEEEPRDE. The span at 160 to 172 shows a compositional bias: polar residues; that stretch reads TYLTQSQDCTPDT. 3 ANK repeats span residues 206 to 235, 240 to 269, and 273 to 302; these read DGHTPLHVAVIHKDAEMVRLLRDAGADLNK, CGRTPLHLAVEAQAASVLELLLKAGADPTA, and GGRTPLGSALLRPNPILARLLRAHGAPEPE. Residues 298–359 are disordered; sequence APEPEDEDDK…KPLPDDPNPA (62 aa). A phosphoserine mark is found at Ser313 and Ser318. A compositionally biased stretch (acidic residues) spans 318–331; it reads SDSDNRDEGDEYDD. The span at 344-359 shows a compositional bias: pro residues; sequence PPSPASKPLPDDPNPA.

Belongs to the NF-kappa-B inhibitor family. Interacts with THRB (via ligand-binding domain). Interacts with RELA and REL. Interacts with COMMD1. Interacts with inhibitor kappa B-interacting Ras-like NKIRAS1 and NKIRAS2. In terms of processing, phosphorylated by RPS6KA1; followed by degradation. Interaction with NKIRAS1 and NKIRAS2 probably prevents phosphorylation. In terms of tissue distribution, highly expressed in testis followed by spleen.

It is found in the cytoplasm. It localises to the nucleus. Its function is as follows. Inhibits NF-kappa-B by complexing with and trapping it in the cytoplasm. However, the unphosphorylated form resynthesized after cell stimulation is able to bind NF-kappa-B allowing its transport to the nucleus and protecting it to further NFKBIA-dependent inactivation. Association with inhibitor kappa B-interacting NKIRAS1 and NKIRAS2 prevent its phosphorylation rendering it more resistant to degradation, explaining its slower degradation. This Mus musculus (Mouse) protein is NF-kappa-B inhibitor beta (Nfkbib).